Here is a 175-residue protein sequence, read N- to C-terminus: Ribosome maturation factor RimM (175 aa).

In terms of domain architecture, PRC barrel spans 95–175 (SEDEFYWREL…RIEVDWDPGF (81 aa)).

This sequence belongs to the RimM family. As to quaternary structure, binds ribosomal protein uS19.

It localises to the cytoplasm. In terms of biological role, an accessory protein needed during the final step in the assembly of 30S ribosomal subunit, possibly for assembly of the head region. Essential for efficient processing of 16S rRNA. May be needed both before and after RbfA during the maturation of 16S rRNA. It has affinity for free ribosomal 30S subunits but not for 70S ribosomes. This is Ribosome maturation factor RimM from Aliivibrio salmonicida (strain LFI1238) (Vibrio salmonicida (strain LFI1238)).